We begin with the raw amino-acid sequence, 475 residues long: Ankyrin repeat, SAM and basic leucine zipper domain-containing protein 1 (475 aa).

Phosphoserine occurs at positions 17, 18, and 20. ANK repeat units follow at residues 45-74, 78-107, 110-144, 148-177, 181-210, and 214-243; these read EKNE…SVDT, YGWT…NASF, DKQT…DPNM, RLMT…DVNA, NGYT…NKMI, and DGKT…PLEG. Residues 272–334 enclose the SAM domain; sequence SYTAFGDLEI…KILAALKELE (63 aa).

As to quaternary structure, interacts with DDX4, PIWIL1, RANBP9 and TDRD1.

The protein localises to the cytoplasm. Its function is as follows. Plays a central role during spermatogenesis by repressing transposable elements and preventing their mobilization, which is essential for the germline integrity. Acts via the piRNA metabolic process, which mediates the repression of transposable elements during meiosis by forming complexes composed of piRNAs and Piwi proteins and governs the methylation and subsequent repression of transposons. Its association with pi-bodies suggests a participation in the primary piRNAs metabolic process. Required prior to the pachytene stage to facilitate the production of multiple types of piRNAs, including those associated with repeats involved in the regulation of retrotransposons. May act by mediating protein-protein interactions during germ cell maturation. The protein is Ankyrin repeat, SAM and basic leucine zipper domain-containing protein 1 (ASZ1) of Atelerix albiventris (Middle-African hedgehog).